Consider the following 597-residue polypeptide: 2-isopropylmalate synthase (597 aa).

Residues 1-80 form a unknown region; the sequence is MQLDIDRLVA…QKNESLERTE (80 aa). Residues 87–349 enclose the Pyruvate carboxyltransferase domain; the sequence is VIIFDTTLRD…ETGIDTTQIV (263 aa). The 2-isopropylmalate synthase stretch occupies residues 87–349; sequence VIIFDTTLRD…ETGIDTTQIV (263 aa). Mn(2+) contacts are provided by D96, H284, H286, and N320. A regulatory domain region spans residues 475-597; that stretch reads KFISQKISTE…KPKAQGSGTI (123 aa).

It belongs to the alpha-IPM synthase/homocitrate synthase family. LeuA type 1 subfamily. In terms of assembly, homodimer. Mn(2+) is required as a cofactor.

It localises to the cytoplasm. It catalyses the reaction 3-methyl-2-oxobutanoate + acetyl-CoA + H2O = (2S)-2-isopropylmalate + CoA + H(+). The protein operates within amino-acid biosynthesis; L-leucine biosynthesis; L-leucine from 3-methyl-2-oxobutanoate: step 1/4. Catalyzes the condensation of the acetyl group of acetyl-CoA with 3-methyl-2-oxobutanoate (2-ketoisovalerate) to form 3-carboxy-3-hydroxy-4-methylpentanoate (2-isopropylmalate). In Neisseria gonorrhoeae (strain ATCC 700825 / FA 1090), this protein is 2-isopropylmalate synthase.